The following is a 466-amino-acid chain: 3-isopropylmalate dehydratase large subunit (466 aa).

[4Fe-4S] cluster is bound by residues C347, C407, and C410.

The protein belongs to the aconitase/IPM isomerase family. LeuC type 1 subfamily. As to quaternary structure, heterodimer of LeuC and LeuD. Requires [4Fe-4S] cluster as cofactor.

It carries out the reaction (2R,3S)-3-isopropylmalate = (2S)-2-isopropylmalate. The protein operates within amino-acid biosynthesis; L-leucine biosynthesis; L-leucine from 3-methyl-2-oxobutanoate: step 2/4. In terms of biological role, catalyzes the isomerization between 2-isopropylmalate and 3-isopropylmalate, via the formation of 2-isopropylmaleate. This is 3-isopropylmalate dehydratase large subunit from Escherichia coli O139:H28 (strain E24377A / ETEC).